A 428-amino-acid polypeptide reads, in one-letter code: Glutamyl-tRNA reductase (428 aa).

Substrate is bound by residues 49–52 (TCNR), serine 109, 114–116 (EGQ), and glutamine 120. The active-site Nucleophile is the cysteine 50. NADP(+) is bound at residue 189-194 (GAGKMS).

It belongs to the glutamyl-tRNA reductase family. In terms of assembly, homodimer.

The catalysed reaction is (S)-4-amino-5-oxopentanoate + tRNA(Glu) + NADP(+) = L-glutamyl-tRNA(Glu) + NADPH + H(+). It participates in porphyrin-containing compound metabolism; protoporphyrin-IX biosynthesis; 5-aminolevulinate from L-glutamyl-tRNA(Glu): step 1/2. Its pathway is porphyrin-containing compound metabolism; chlorophyll biosynthesis. Its function is as follows. Catalyzes the NADPH-dependent reduction of glutamyl-tRNA(Glu) to glutamate 1-semialdehyde (GSA). In Trichormus variabilis (strain ATCC 29413 / PCC 7937) (Anabaena variabilis), this protein is Glutamyl-tRNA reductase.